Reading from the N-terminus, the 117-residue chain is Probable prefoldin subunit 1 (117 aa).

The protein belongs to the prefoldin subunit beta family. In terms of assembly, heterohexamer of two PFD-alpha type and four PFD-beta type subunits.

Its subcellular location is the cytoplasm. Its function is as follows. Binds specifically to cytosolic chaperonin (c-CPN) and transfers target proteins to it. Binds to nascent polypeptide chain and promotes folding in an environment in which there are many competing pathways for nonnative proteins. Has a role in gonadogenesis. This chain is Probable prefoldin subunit 1 (pfd-1), found in Caenorhabditis briggsae.